The primary structure comprises 1280 residues: Fibronectin type III domain-containing protein (1280 aa).

Residues 1–19 (MWQILLAISIFSLSKLSNA) form the signal peptide. Over 20–1156 (QQQPKVAPPQ…RVSTPIYQSA (1137 aa)) the chain is Extracellular. Disulfide bonds link cysteine 58/cysteine 111, cysteine 268/cysteine 321, cysteine 369/cysteine 417, cysteine 460/cysteine 511, and cysteine 553/cysteine 604. Fibronectin type-III domains are found at residues 628-722 (PFPP…TGSF), 730-824 (PEKW…VKQF), 830-933 (PTGK…VAAD), 939-1033 (PGPP…TEKT), and 1039-1131 (PAKP…PASD). A compositionally biased stretch (polar residues) spans 1118-1130 (YPSQENPQESPAS). A disordered region spans residues 1118–1144 (YPSQENPQESPASDITEARPRPGISNV). The chain crosses the membrane as a helical span at residues 1157-1177 (WFIALLVLIALLLLVLLTFVL). At 1178-1280 (YTRHQGAKYL…KDPSSLATFV (103 aa)) the chain is on the cytoplasmic side. The segment at 1206–1280 (DEEEGSFSNN…KDPSSLATFV (75 aa)) is disordered. Positions 1262-1273 (DEKKAPPEEKDP) are enriched in basic and acidic residues.

Component of the acid-insoluble organic matrix of the aragonitic skeleton (at protein level).

Its subcellular location is the membrane. The sequence is that of Fibronectin type III domain-containing protein from Acropora millepora (Staghorn coral).